Here is a 1058-residue protein sequence, read N- to C-terminus: Gem-associated protein 4 (1058 aa).

At Met1 the chain carries N-acetylmethionine. Position 84 is a phosphothreonine (Thr84). Phosphoserine occurs at positions 86 and 205. Residues 714 to 735 are leucine-zipper; it reads LPKEKRCLSLDRKDLAIHILEL.

As to quaternary structure, part of the core SMN complex that contains SMN1, GEMIN2/SIP1, DDX20/GEMIN3, GEMIN4, GEMIN5, GEMIN6, GEMIN7, GEMIN8 and STRAP/UNRIP. Part of the SMN-Sm complex that contains SMN1, GEMIN2/SIP1, DDX20/GEMIN3, GEMIN4, GEMIN5, GEMIN6, GEMIN7, GEMIN8, STRAP/UNRIP and the Sm proteins SNRPB, SNRPD1, SNRPD2, SNRPD3, SNRPE, SNRPF and SNRPG. Interacts with GEMIN3; the interaction is direct. Interacts with GEMIN5. Interacts with GEMIN8; the interaction is direct. Interacts with several snRNP SM core proteins, including SNRPB, SNRPD1, SNRPD2, SNRPD3 and SNRPE. Interacts with PPP4R2.

The protein resides in the cytoplasm. It is found in the nucleus. It localises to the nucleolus. Its subcellular location is the gem. Functionally, the SMN complex catalyzes the assembly of small nuclear ribonucleoproteins (snRNPs), the building blocks of the spliceosome, and thereby plays an important role in the splicing of cellular pre-mRNAs. Most spliceosomal snRNPs contain a common set of Sm proteins SNRPB, SNRPD1, SNRPD2, SNRPD3, SNRPE, SNRPF and SNRPG that assemble in a heptameric protein ring on the Sm site of the small nuclear RNA to form the core snRNP (Sm core). In the cytosol, the Sm proteins SNRPD1, SNRPD2, SNRPE, SNRPF and SNRPG are trapped in an inactive 6S pICln-Sm complex by the chaperone CLNS1A that controls the assembly of the core snRNP. To assemble core snRNPs, the SMN complex accepts the trapped 5Sm proteins from CLNS1A forming an intermediate. Binding of snRNA inside 5Sm triggers eviction of the SMN complex, thereby allowing binding of SNRPD3 and SNRPB to complete assembly of the core snRNP. This Homo sapiens (Human) protein is Gem-associated protein 4 (GEMIN4).